The chain runs to 508 residues: Photosystem II CP47 reaction center protein (508 aa).

6 helical membrane-spanning segments follow: residues serine 21–serine 36, isoleucine 101–tryptophan 115, glycine 140–phenylalanine 156, isoleucine 203–leucine 218, valine 237–valine 252, and serine 457–arginine 472.

This sequence belongs to the PsbB/PsbC family. PsbB subfamily. As to quaternary structure, PSII is composed of 1 copy each of membrane proteins PsbA, PsbB, PsbC, PsbD, PsbE, PsbF, PsbH, PsbI, PsbJ, PsbK, PsbL, PsbM, PsbT, PsbY, PsbZ, Psb30/Ycf12, at least 3 peripheral proteins of the oxygen-evolving complex and a large number of cofactors. It forms dimeric complexes. It depends on Binds multiple chlorophylls. PSII binds additional chlorophylls, carotenoids and specific lipids. as a cofactor.

Its subcellular location is the plastid. It localises to the chloroplast thylakoid membrane. Functionally, one of the components of the core complex of photosystem II (PSII). It binds chlorophyll and helps catalyze the primary light-induced photochemical processes of PSII. PSII is a light-driven water:plastoquinone oxidoreductase, using light energy to abstract electrons from H(2)O, generating O(2) and a proton gradient subsequently used for ATP formation. The polypeptide is Photosystem II CP47 reaction center protein (Euglena gracilis).